Consider the following 131-residue polypeptide: Protein Turandot M (131 aa).

An N-terminal signal peptide occupies residues 1-23; sequence MNPTIYLSCLMVFSVFLLGKVNA.

This sequence belongs to the Turandot family.

It is found in the secreted. Its function is as follows. A humoral factor that may play a role in stress tolerance. Requires Mekk1 expression in the fat body to regulate response to septic injury and consequent immune response. The sequence is that of Protein Turandot M from Drosophila melanogaster (Fruit fly).